The primary structure comprises 974 residues: Translation initiation factor IF-2 (974 aa).

A disordered region spans residues Phe31–Pro376. The span at Pro52–Gly68 shows a compositional bias: low complexity. Positions Gly83–Ala96 are enriched in pro residues. Residues Ala97–Lys133 show a composition bias toward low complexity. A compositionally biased stretch (pro residues) spans Pro134–Pro147. Composition is skewed to low complexity over residues Ala148 to Ala166 and Arg179 to Glu191. Composition is skewed to pro residues over residues Pro195–Ala210 and Arg253–Gly266. A compositionally biased stretch (low complexity) spans Ala267–Pro277. Over residues Gly279–Gly332 the composition is skewed to gly residues. The segment covering Arg349–Lys358 has biased composition (basic residues). A tr-type G domain is found at Ser470–Leu641. Positions Gly479–Thr486 are G1. Residue Gly479–Thr486 coordinates GTP. The segment at Gly504–His508 is G2. The segment at Asp529–Gly532 is G3. GTP-binding positions include Asp529 to His533 and Asn583 to Asp586. The tract at residues Asn583–Asp586 is G4. The tract at residues Ser619–Lys621 is G5.

It belongs to the TRAFAC class translation factor GTPase superfamily. Classic translation factor GTPase family. IF-2 subfamily.

The protein localises to the cytoplasm. Its function is as follows. One of the essential components for the initiation of protein synthesis. Protects formylmethionyl-tRNA from spontaneous hydrolysis and promotes its binding to the 30S ribosomal subunits. Also involved in the hydrolysis of GTP during the formation of the 70S ribosomal complex. The sequence is that of Translation initiation factor IF-2 from Rhodococcus opacus (strain B4).